Here is a 749-residue protein sequence, read N- to C-terminus: Pectate disaccharide-lyase (749 aa).

An N-terminal signal peptide occupies residues 1-26; the sequence is MKYAASGLLSVALNSLLLLGSNQRFA. Ca(2+) contacts are provided by D538, D562, D563, and D566. K595 serves as the catalytic Proton acceptor.

It belongs to the polysaccharide lyase 9 family. Requires Ca(2+) as cofactor.

It localises to the secreted. It carries out the reaction [(1-&gt;4)-alpha-D-galacturonosyl](n) = 4-(4-deoxy-alpha-D-galact-4-enuronosyl)-D-galacturonate + [(1-&gt;4)-alpha-D-galacturonosyl](n-2). Activity on pectate is nearly completely inhibited by ethyleneglycol-bis-(P-aminoethyl ether) N,N'-tetraacetic acid (EGTA), EDTA or nitrilotriacetic acid. Activity is specifically restored by the addition of Ca(2+). Functionally, exo-cleaving lyase that catalyzes the digestion of pectate. Contributes to pectate catabolism but not to bacterial virulence. In vitro can also use citrus pectin and highly methyl-esterified Link pectin as substrates. This chain is Pectate disaccharide-lyase, found in Dickeya chrysanthemi (Pectobacterium chrysanthemi).